Reading from the N-terminus, the 710-residue chain is MRYIVSPQLVLQVGKGQEVERALYLTPYDYIDEKSPIYYFLRSHLNIQQPEIVKRHILLTLRMTQLKGYLGNLLDIKDDIIIYSHKNNLEYSYVDNTIFNPFVYTQKKTLLKNDSFLYNVYPGACDFLVIWVVRACDTSIPEFGSYEDVDNNIIKFETMLMEVFPQLDLDITVESKFNNIFRTNLKLTGLKKIIQRVQDLDINYKSLLSRYDEHFINMTGNHFILNDEQLNLSIWDLDGTLALSSDGDTVMINNVKLFTDLVSDIDTQMERIKGDITYKVHLATPINSRIKLDIETSFIFIETATNNILLSSDKKISIILAKNHISIKVKNHIPNIEKYFTFLVIAINAMFNSVQKSADFTKVETVYWSRICQNTKNKNRKPIIINYLDPGMKKISNNFYRSDEKEVFINDNGIMFTCMDPLGKYNKVGFLNIFHDMRKYCIPCCFLHDQSHRSTFSSCVHQIDVEKKIVSPYILNFGKVVTESKMSFLPIIFDAFLNDGMTANMEQDNKRLKETSGYHIVRCCAGDDIVRLRTTSDIIQFVNEDKNILIVNDMVYFPMNASDIGKKIHILIQEIVHEVMIVKKKESSDKIDFFPPNYKLLKDLFPKQTIQTPIQSDAGMVLTTDGFYIDGKLFNEDLSSKYVTFTKNVIASDAVAKYFSPLFKYVISEAKDRFIKTWMINIMIHMNVDPNNIIPTLEKYYPNSGRAQIN.

The protein belongs to the poxviridae VETF large subunit family. As to quaternary structure, heterodimer of a 70 kDa and a 82 kDa subunit. Part of the early transcription complex composed of ETF, RAP94/OPG109, and the DNA-directed RNA polymerase.

It is found in the virion. Its function is as follows. Acts with RNA polymerase to initiate transcription from early gene promoters. Is recruited by the RPO-associated protein of 94 kDa RAP94/OPG109 to form the early transcription complex, which also contains the core RNA polymerase. ETF heterodimer binds to early gene promoters. The sequence is that of Early transcription factor 82 kDa subunit (OPG133) from Homo sapiens (Human).